The chain runs to 960 residues: Dynamin-like GTPase OPA1, mitochondrial (960 aa).

A mitochondrion-targeting transit peptide spans 1-87; sequence MWRLRRAAVA…IKYGYQPRRN (87 aa). Topologically, residues 88-96 are mitochondrial matrix; the sequence is FWPARLATR. The chain crosses the membrane as a helical span at residues 97-113; it reads LLKLRYLILGSAVGGGY. The Mitochondrial intermembrane portion of the chain corresponds to 114 to 770; that stretch reads TAKKTFDQWK…NAIENMVGPD (657 aa). Residues 210–254 adopt a coiled-coil conformation; sequence SDKEKIDQLQEELLHTQLKYQRILERLEKENKELRKLVLQKDDKG. Lys228 carries the post-translational modification N6-acetyllysine. Residues 285–561 enclose the Dynamin-type G domain; that stretch reads QDHLPRVVVV…FWKMVRESVE (277 aa). The interval 295–302 is G1 motif; sequence GDQSAGKT. GTP-binding residues include Ser298, Gly300, Lys301, Thr302, Ser303, and Gly317. Thr302 is a binding site for Mg(2+). Residues 321–324 are G2 motif; sequence MMTR. Residues Thr323 and Asp398 each coordinate Mg(2+). Residues 398 to 401 form a G3 motif region; the sequence is DLPG. Residues 467–470 are G4 motif; the sequence is TKVD. Residues Lys468, Asp470, and Thr503 each coordinate GTP. The interval 501 to 504 is G5 motif; sequence VVTG. Stalk region stretches follow at residues 589-836 and 874-928; these read DRNE…IKDT and CNDV…IKLL. A paddle region region spans residues 736–856; the sequence is SDKQQWDAAI…KTALNHCNLC (121 aa). An intramembrane segment occupies 771-781; that stretch reads WKKRWLYWKNR. The Mitochondrial intermembrane portion of the chain corresponds to 782-960; that stretch reads TQEQCVHNET…AFIEALHQEK (179 aa). Cys856 and Cys874 are oxidised to a cystine. Residues 895-960 adopt a coiled-coil conformation; that stretch reads RQQLTNTEVR…AFIEALHQEK (66 aa).

Belongs to the TRAFAC class dynamin-like GTPase superfamily. Dynamin/Fzo/YdjA family. In terms of assembly, oligomeric complex consisting of membrane-bound and soluble forms of OPA1. Interacts with RCC1L; RCC1L acts as a guanine nucleotide exchange factor (GEF) for OPA1 by exchanging bound GDP for free GTP. Interacts with CHCHD3 and IMMT; these interactions occur preferentially with soluble OPA1 forms. Interacts with PRELID1. In terms of processing, cleaved by OMA1 or YME1L downstream of the transmembrane region in response to different signals to generate soluble forms. Cleaved by OMA1 at position S1 following stress conditions, generating the short soluble form (Dynamin-like GTPase OPA1, short form; S-OPA1). AFG3L2 is involved in the regulation of OMA1-dependent processing of OPA1. PARL-dependent proteolytic processing releases an antiapoptotic soluble form not required for mitochondrial fusion.

The protein resides in the mitochondrion inner membrane. The protein localises to the mitochondrion intermembrane space. It carries out the reaction GTP + H2O = GDP + phosphate + H(+). Its activity is regulated as follows. Activated by guanine nucleotide exchange factor RCC1L. In terms of biological role, dynamin-related GTPase that is essential for normal mitochondrial morphology by mediating fusion of the mitochondrial inner membranes, regulating cristae morphology and maintaining respiratory chain function. Exists in two forms: the transmembrane, long form (Dynamin-like GTPase OPA1, long form; L-OPA1), which is tethered to the inner mitochondrial membrane, and the short soluble form (Dynamin-like GTPase OPA1, short form; S-OPA1), which results from proteolytic cleavage and localizes in the intermembrane space. Both forms (L-OPA1 and S-OPA1) cooperate to catalyze the fusion of the mitochondrial inner membrane. The equilibrium between L-OPA1 and S-OPA1 is essential: excess levels of S-OPA1, produced by cleavage by OMA1 following loss of mitochondrial membrane potential, lead to an impaired equilibrium between L-OPA1 and S-OPA1, inhibiting mitochondrial fusion. The balance between L-OPA1 and S-OPA1 also influences cristae shape and morphology. Involved in remodeling cristae and the release of cytochrome c during apoptosis. Proteolytic processing by PARL in response to intrinsic apoptotic signals may lead to disassembly of OPA1 oligomers and release of the caspase activator cytochrome C (CYCS) into the mitochondrial intermembrane space. Acts as a regulator of T-helper Th17 cells, which are characterized by cells with fused mitochondria with tight cristae, by mediating mitochondrial membrane remodeling: OPA1 is required for interleukin-17 (IL-17) production. Its role in mitochondrial morphology is required for mitochondrial genome maintenance. Constitutes the transmembrane long form (L-OPA1) that plays a central role in mitochondrial inner membrane fusion and cristae morphology. L-OPA1 and the soluble short form (S-OPA1) form higher-order helical assemblies that coordinate the fusion of mitochondrial inner membranes. Inner membrane-anchored L-OPA1 molecules initiate membrane remodeling by recruiting soluble S-OPA1 to rapidly polymerize into a flexible cylindrical scaffold encaging the mitochondrial inner membrane. Once at the membrane surface, the formation of S-OPA1 helices induce bilayer curvature. OPA1 dimerization through the paddle region, which inserts into cardiolipin-containing membrane, promotes GTP hydrolysis and the helical assembly of a flexible OPA1 lattice on the membrane, which drives membrane curvature and mitochondrial fusion. Plays a role in the maintenance and remodeling of mitochondrial cristae, some invaginations of the mitochondrial inner membrane that provide an increase in the surface area. Probably acts by forming helical filaments at the inside of inner membrane tubes with the shape and dimensions of crista junctions. The equilibrium between L-OPA1 and S-OPA1 influences cristae shape and morphology: increased L-OPA1 levels promote cristae stacking and elongated mitochondria, while increased S-OPA1 levels correlated with irregular cristae packing and round mitochondria shape. Functionally, constitutes the soluble short form (S-OPA1) generated by cleavage by OMA1, which plays a central role in mitochondrial inner membrane fusion and cristae morphology. The transmembrane long form (L-OPA1) and the S-OPA1 form higher-order helical assemblies that coordinate the fusion of mitochondrial inner membranes. Inner membrane-anchored L-OPA1 molecules initiate membrane remodeling by recruiting soluble S-OPA1 to rapidly polymerize into a flexible cylindrical scaffold encaging the mitochondrial inner membrane. Once at the membrane surface, the formation of S-OPA1 helices induce bilayer curvature. OPA1 dimerization through the paddle region, which inserts into cardiolipin-containing membrane, promotes GTP hydrolysis and the helical assembly of a flexible OPA1 lattice on the membrane, which drives membrane curvature and mitochondrial fusion. Excess levels of S-OPA1 produced by cleavage by OMA1 following stress conditions that induce loss of mitochondrial membrane potential, lead to an impaired equilibrium between L-OPA1 and S-OPA1, thereby inhibiting mitochondrial fusion. Involved in mitochondrial safeguard in response to transient mitochondrial membrane depolarization by mediating flickering: cleavage by OMA1 leads to excess production of S-OPA1, preventing mitochondrial hyperfusion. Plays a role in the maintenance and remodeling of mitochondrial cristae, some invaginations of the mitochondrial inner membrane that provide an increase in the surface area. Probably acts by forming helical filaments at the inside of inner membrane tubes with the shape and dimensions of crista junctions. The equilibrium between L-OPA1 and S-OPA1 influences cristae shape and morphology: increased L-OPA1 levels promote cristae stacking and elongated mitochondria, while increased S-OPA1 levels correlated with irregular cristae packing and round mitochondria shape. The sequence is that of Dynamin-like GTPase OPA1, mitochondrial from Pongo abelii (Sumatran orangutan).